The chain runs to 1085 residues: Toxin VasX (1085 aa).

A disordered region spans residues 1–20 (MSNPNQAAKTGQTNDAQNPA). 4 helical membrane passes run 753 to 773 (ALGEAIYATGNTIVVAGAISA), 813 to 833 (IALVATVGMIASALETWESWG), 860 to 880 (IIFYIQFFTLLGSGIGGPSIA), and 884 to 904 (AGWMLAGFAVIGIVYLIGVIL).

It is found in the secreted. The protein localises to the host membrane. Its function is as follows. Toxin secreted by the type VI (T6SS) secretion system that acts on prokaryotic target cells. Acts in conjunction with VasW, an accessory protein to VasX, to compromise the inner membrane of prokaryotic target cells. This is Toxin VasX from Vibrio cholerae serotype O1 (strain ATCC 39315 / El Tor Inaba N16961).